The following is a 487-amino-acid chain: uncharacterized protein (487 aa).

2 consecutive ABC transporter domains span residues Val-5–Lys-249 and Ile-265–Ala-487. Gly-297–Thr-304 lines the ATP pocket.

It belongs to the ABC transporter superfamily.

The protein resides in the mitochondrion. This is an uncharacterized protein from Schizosaccharomyces pombe (strain 972 / ATCC 24843) (Fission yeast).